We begin with the raw amino-acid sequence, 203 residues long: uncharacterized protein (203 aa).

A disordered region spans residues Ser117–Ala138. The span at Gln124–Ala138 shows a compositional bias: polar residues.

The protein localises to the cytoplasm. Its subcellular location is the nucleus. This is an uncharacterized protein from Schizosaccharomyces pombe (strain 972 / ATCC 24843) (Fission yeast).